The primary structure comprises 246 residues: UPF0758 protein SSU98_1084 (246 aa).

Positions 103 to 225 constitute an MPN domain; sequence RILGSEKLGR…YYSFREESDV (123 aa). Residues histidine 174, histidine 176, and aspartate 187 each contribute to the Zn(2+) site. The JAMM motif motif lies at 174–187; sequence HNHPSGSVQPSRND.

The protein belongs to the UPF0758 family.

The sequence is that of UPF0758 protein SSU98_1084 from Streptococcus suis (strain 98HAH33).